The chain runs to 61 residues: U-scoloptoxin(14)-Sm1a (61 aa).

The first 24 residues, 1–24, serve as a signal peptide directing secretion; it reads MNPKLCMLLLVCLMAFYVIETVQA.

The protein belongs to the scoloptoxin-14 family. Contains 4 disulfide bonds. Expressed by the venom gland.

It localises to the secreted. This Scolopendra morsitans (Tanzanian blue ringleg centipede) protein is U-scoloptoxin(14)-Sm1a.